Here is a 241-residue protein sequence, read N- to C-terminus: 3-dehydroquinate dehydratase (241 aa).

3-dehydroquinate is bound by residues 35–37 (ELR) and arginine 70. The Proton donor/acceptor role is filled by histidine 132. The Schiff-base intermediate with substrate role is filled by lysine 159. 3-dehydroquinate is bound by residues arginine 201 and glutamine 224.

The protein belongs to the type-I 3-dehydroquinase family. In terms of assembly, homodimer.

The enzyme catalyses 3-dehydroquinate = 3-dehydroshikimate + H2O. Its pathway is metabolic intermediate biosynthesis; chorismate biosynthesis; chorismate from D-erythrose 4-phosphate and phosphoenolpyruvate: step 3/7. Its function is as follows. Involved in the third step of the chorismate pathway, which leads to the biosynthesis of aromatic amino acids. Catalyzes the cis-dehydration of 3-dehydroquinate (DHQ) and introduces the first double bond of the aromatic ring to yield 3-dehydroshikimate. The chain is 3-dehydroquinate dehydratase from Staphylococcus carnosus (strain TM300).